The sequence spans 306 residues: tRNA dimethylallyltransferase (306 aa).

ATP is bound at residue 9-16; the sequence is GPTAVGKT. Position 11–16 (11–16) interacts with substrate; sequence TAVGKT. The interval 34-37 is interaction with substrate tRNA; it reads DSRQ.

This sequence belongs to the IPP transferase family. Monomer. It depends on Mg(2+) as a cofactor.

It carries out the reaction adenosine(37) in tRNA + dimethylallyl diphosphate = N(6)-dimethylallyladenosine(37) in tRNA + diphosphate. Functionally, catalyzes the transfer of a dimethylallyl group onto the adenine at position 37 in tRNAs that read codons beginning with uridine, leading to the formation of N6-(dimethylallyl)adenosine (i(6)A). In Roseiflexus castenholzii (strain DSM 13941 / HLO8), this protein is tRNA dimethylallyltransferase.